We begin with the raw amino-acid sequence, 1335 residues long: Membrane-associated phosphatidylinositol transfer protein 2 (1335 aa).

Disordered regions lie at residues glutamate 32 to glycine 51 and glutamate 262 to glutamate 341. Residues lysine 275–glycine 286 show a composition bias toward polar residues. Positions lysine 299–arginine 319 are enriched in low complexity. Serine 334, serine 338, serine 365, and serine 586 each carry phosphoserine. Residues histidine 606 to tyrosine 657 are disordered. A compositionally biased stretch (gly residues) spans glycine 609–glycine 618. At serine 630 the chain carries Phosphoserine. A compositionally biased stretch (basic and acidic residues) spans glycine 639 to aspartate 653. Phosphoserine is present on residues serine 686, serine 687, and serine 688. In terms of domain architecture, DDHD spans phenylalanine 701 to arginine 949. Position 814 is an omega-N-methylarginine (arginine 814). The interval alanine 861–serine 880 is disordered. A Phosphoserine modification is found at serine 1263. A disordered region spans residues threonine 1282–valine 1313. The span at glutamine 1298–valine 1313 shows a compositional bias: polar residues.

Belongs to the PtdIns transfer protein family. PI transfer class IIA subfamily. Interacts with CPNE4 (via VWFA domain). Interacts with PTK2B via its C-terminus. As to expression, detected in retina and in the dentate gyrus of the cerebellum.

The protein resides in the endomembrane system. Its subcellular location is the cytoplasm. It localises to the cytoskeleton. Catalyzes the transfer of phosphatidylinositol and phosphatidylcholine between membranes (in vitro). Binds calcium ions. This Mus musculus (Mouse) protein is Membrane-associated phosphatidylinositol transfer protein 2 (Pitpnm2).